We begin with the raw amino-acid sequence, 236 residues long: Mammalian ependymin-related protein 1 (236 aa).

The N-terminal stretch at 1 to 35 (MPRRAPLRVARGSLDAWLLGGLWVCALGCLCGVGM) is a signal peptide. 3 disulfides stabilise this stretch: C54–C184, C100–C234, and C125–C222. N-linked (GlcNAc...) asparagine glycosylation is found at N142 and N194.

It belongs to the ependymin family. In terms of assembly, homodimer. Post-translationally, N-glycosylated; the glycan contains mannose-6-phosphate moieties.

It is found in the lysosome lumen. Its subcellular location is the secreted. Functionally, binds anionic lipids and gangliosides at acidic pH. The protein is Mammalian ependymin-related protein 1 (EPDR1) of Bos taurus (Bovine).